Reading from the N-terminus, the 173-residue chain is Photosystem I assembly protein Ycf3 (173 aa).

TPR repeat units follow at residues 35 to 68 (AFAY…EEDP), 72 to 105 (SYTF…NPKM), and 120 to 153 (GEQA…APDN).

This sequence belongs to the Ycf3 family.

The protein resides in the plastid. It is found in the cyanelle thylakoid membrane. Essential for the assembly of the photosystem I (PSI) complex. May act as a chaperone-like factor to guide the assembly of the PSI subunits. The sequence is that of Photosystem I assembly protein Ycf3 from Cyanophora paradoxa.